The sequence spans 201 residues: 3-isopropylmalate dehydratase small subunit (201 aa).

This sequence belongs to the LeuD family. LeuD type 1 subfamily. As to quaternary structure, heterodimer of LeuC and LeuD.

It carries out the reaction (2R,3S)-3-isopropylmalate = (2S)-2-isopropylmalate. Its pathway is amino-acid biosynthesis; L-leucine biosynthesis; L-leucine from 3-methyl-2-oxobutanoate: step 2/4. In terms of biological role, catalyzes the isomerization between 2-isopropylmalate and 3-isopropylmalate, via the formation of 2-isopropylmaleate. This Dinoroseobacter shibae (strain DSM 16493 / NCIMB 14021 / DFL 12) protein is 3-isopropylmalate dehydratase small subunit.